The following is a 362-amino-acid chain: DNA replication and repair protein RecF (362 aa).

30–37 (GPNGSGKT) is a binding site for ATP.

This sequence belongs to the RecF family.

The protein resides in the cytoplasm. In terms of biological role, the RecF protein is involved in DNA metabolism; it is required for DNA replication and normal SOS inducibility. RecF binds preferentially to single-stranded, linear DNA. It also seems to bind ATP. The protein is DNA replication and repair protein RecF of Proteus mirabilis (strain HI4320).